The following is a 111-amino-acid chain: uncharacterized protein (111 aa).

A helical transmembrane segment spans residues 27 to 47 (HLFHFPSISFFFFFFFFFFSF).

It is found in the membrane. This is an uncharacterized protein from Saccharomyces cerevisiae (strain ATCC 204508 / S288c) (Baker's yeast).